Here is a 113-residue protein sequence, read N- to C-terminus: U11-theraphotoxin-Hhn1a (113 aa).

An N-terminal signal peptide occupies residues 1–21 (MNTVRVTFLLVFVLAVSLGQA). Residues 22 to 74 (DKDENRMEMQEKTEQGNSYLDFAENLPLQKLEELEAKLLEEDSEESRNSRQKR) constitute a propeptide that is removed on maturation. Over residues 60-69 (LEEDSEESRN) the composition is skewed to basic and acidic residues. The segment at 60-83 (LEEDSEESRNSRQKRCIGEGVPCD) is disordered. Disulfide bonds link Cys75/Cys90, Cys82/Cys95, and Cys89/Cys110.

The protein belongs to the neurotoxin 14 (magi-1) family. 01 (HNTX-16) subfamily. In terms of tissue distribution, expressed by the venom gland.

Its subcellular location is the secreted. Its function is as follows. Probable ion channel inhibitor. In Cyriopagopus hainanus (Chinese bird spider), this protein is U11-theraphotoxin-Hhn1a.